A 581-amino-acid polypeptide reads, in one-letter code: Arginine--tRNA ligase (581 aa).

The short motif at 123 to 133 (PNVAKEMHVGH) is the 'HIGH' region element.

Belongs to the class-I aminoacyl-tRNA synthetase family. Monomer.

It localises to the cytoplasm. The catalysed reaction is tRNA(Arg) + L-arginine + ATP = L-arginyl-tRNA(Arg) + AMP + diphosphate. The chain is Arginine--tRNA ligase from Blochmanniella pennsylvanica (strain BPEN).